The primary structure comprises 272 residues: Shikimate dehydrogenase (NADP(+)) (272 aa).

Shikimate-binding positions include 14 to 16 (SKS) and Thr-61. The Proton acceptor role is filled by Lys-65. Glu-77 serves as a coordination point for NADP(+). Shikimate-binding residues include Asn-86 and Asp-102. NADP(+) contacts are provided by residues 126-130 (GAGGA), 149-154 (NRTASR), and Met-213. Tyr-215 is a shikimate binding site. Position 237 (Gly-237) interacts with NADP(+).

The protein belongs to the shikimate dehydrogenase family. Homodimer.

The catalysed reaction is shikimate + NADP(+) = 3-dehydroshikimate + NADPH + H(+). Its pathway is metabolic intermediate biosynthesis; chorismate biosynthesis; chorismate from D-erythrose 4-phosphate and phosphoenolpyruvate: step 4/7. Involved in the biosynthesis of the chorismate, which leads to the biosynthesis of aromatic amino acids. Catalyzes the reversible NADPH linked reduction of 3-dehydroshikimate (DHSA) to yield shikimate (SA). The sequence is that of Shikimate dehydrogenase (NADP(+)) from Salmonella schwarzengrund (strain CVM19633).